The sequence spans 862 residues: Cadherin-related family member 5 (862 aa).

A signal peptide spans 1 to 28; it reads MGAPALLWPPLLLPLLTVLFGHLPGTLA. The Extracellular portion of the chain corresponds to 29-671; it reads QAQVCSANQT…GQRFSTVDMA (643 aa). N-linked (GlcNAc...) asparagine glycosylation is found at asparagine 36, asparagine 45, asparagine 135, asparagine 173, asparagine 201, asparagine 311, asparagine 408, asparagine 438, and asparagine 479. Cadherin domains lie at 40–127, 128–240, 252–357, and 358–462; these read FTMN…APEF, PFTI…TPWF, IQAQ…PLQF, and SQSL…PPST. The interval 452 to 658 is disordered; the sequence is IQVSEREPPS…TTGPISGVGE (207 aa). Over residues 461–500 the composition is skewed to low complexity; that stretch reads STESPTPPEAGGTTGPSSNTTLETPSTSGTSQGPATTSSG. Polar residues predominate over residues 529-652; that stretch reads LGISTSPQTA…GTSQPTTTGP (124 aa). Repeat copies occupy residues 545–575, 576–606, and 607–636. Residues 545–648 form a 4 X 31 AA approximate tandem repeats region; sequence TQTPKPGTSQ…TPKPGTSQPT (104 aa). A 4; truncated repeat occupies 637–648; the sequence is TQTPKPGTSQPT. Residues 672–692 traverse the membrane as a helical segment; it reads VLGGVLGALLLLALIFLIILI. Topologically, residues 693–862 are cytoplasmic; that stretch reads HKHYRHRFTC…LGAVADNTYV (170 aa). Residues 693-862 are mediates interaction with USH1C and MYO7B and is required for proper localization to microvilli tips and function in microvilli organization; it reads HKHYRHRFTC…LGAVADNTYV (170 aa). 2 disordered regions span residues 706–803 and 821–862; these read KAKE…EGGY and LNEP…NTYV. Phosphoserine is present on residues serine 729, serine 751, and serine 755. A compositionally biased stretch (pro residues) spans 739-768; it reads GPEPVQPPLRPPSPMSSSPTPPSSMPPSPQ. A Phosphothreonine modification is found at threonine 758. Residues serine 766 and serine 783 each carry the phosphoserine modification. Positions 791-801 are enriched in basic and acidic residues; that stretch reads LTKERRPEGEG. The residue at position 825 (threonine 825) is a Phosphothreonine. Over residues 827-837 the composition is skewed to low complexity; that stretch reads DVDSASASGSE. Phosphoserine occurs at positions 832, 834, and 836.

In terms of assembly, part of the IMAC/intermicrovillar adhesion complex/intermicrovillar tip-link complex composed of ANKS4B, MYO7B, USH1C, CDHR2 and CDHR5. Interacts (via cytoplasmic domain) with USH1C and MYO7B; required for proper localization of CDHR5 to microvilli tips and its function in brush border differentiation. In terms of processing, N- and O-glycosylated. In terms of tissue distribution, expressed predominantly in kidney. Also detected in lung and small intestine.

It localises to the apical cell membrane. The protein resides in the cell projection. Its subcellular location is the microvillus membrane. Its function is as follows. Intermicrovillar adhesion molecule that forms, via its extracellular domain, calcium-dependent heterophilic complexes with CDHR2 on adjacent microvilli. Thereby, controls the packing of microvilli at the apical membrane of epithelial cells. Through its cytoplasmic domain, interacts with microvillus cytoplasmic proteins to form the intermicrovillar adhesion complex/IMAC. This complex plays a central role in microvilli and epithelial brush border differentiation. The chain is Cadherin-related family member 5 from Rattus norvegicus (Rat).